The following is a 1077-amino-acid chain: Insulin receptor substrate 2-B (1077 aa).

A disordered region spans residues 1–66; sequence MAGVLCPTEE…APASTAEDDV (66 aa). Short sequence motifs (YXXM motif) lie at residues 33-36 and 147-150; these read YRRM and YFAM. The 106-residue stretch at 65 to 170 folds into the PH domain; it reads DVRKRGYLRK…WYQALSELIN (106 aa). Residues 195–299 form the IRS-type PTB domain; the sequence is FKEVWQVNVK…DTMKALKAYS (105 aa). Disordered stretches follow at residues 342–373, 428–464, and 476–495; these read ETVVGTPPSAKNNSFRFRTSSEGEGTMTRPFR, VCSSNGHGSASETLTRPSSSSVCGSPSDGGFISSDEY, and VRSNTPDSLGNTPPIQEENT. 2 stretches are compositionally biased toward polar residues: residues 350–364 and 428–444; these read SAKNNSFRFRTSSEG and VCSSNGHGSASETLTRP. The segment covering 445-457 has biased composition (low complexity); the sequence is SSSSVCGSPSDGG. Residues 477–495 are compositionally biased toward polar residues; that stretch reads RSNTPDSLGNTPPIQEENT. A YXXM motif 3 motif is present at residues 499–502; the sequence is YMSM. Residues 530-544 are compositionally biased toward polar residues; that stretch reads KPTNAASQQKSQTAV. Residues 530-571 form a disordered region; it reads KPTNAASQQKSQTAVSLDEDSEETNKQFAYAESPKLKDSSHV. 6 consecutive short sequence motifs (YXXM motif) follow at residues 595 to 598, 608 to 611, 634 to 637, 666 to 669, 713 to 716, and 891 to 894; these read YMPM, YLPM, YMMM, YMDM, YVPM, and YTTM.

Post-translationally, phosphorylated by INSR.

Potentiates insulin signaling. This Xenopus laevis (African clawed frog) protein is Insulin receptor substrate 2-B (irs2-b).